Consider the following 48-residue polypeptide: Large ribosomal subunit protein bL34 (48 aa).

The protein belongs to the bacterial ribosomal protein bL34 family.

This is Large ribosomal subunit protein bL34 from Gloeothece citriformis (strain PCC 7424) (Cyanothece sp. (strain PCC 7424)).